We begin with the raw amino-acid sequence, 316 residues long: N-acetyl-gamma-glutamyl-phosphate reductase (316 aa).

Cys136 is an active-site residue.

The protein belongs to the NAGSA dehydrogenase family. Type 1 subfamily.

The protein resides in the cytoplasm. The enzyme catalyses N-acetyl-L-glutamate 5-semialdehyde + phosphate + NADP(+) = N-acetyl-L-glutamyl 5-phosphate + NADPH + H(+). The protein operates within amino-acid biosynthesis; L-arginine biosynthesis; N(2)-acetyl-L-ornithine from L-glutamate: step 3/4. Its function is as follows. Catalyzes the NADPH-dependent reduction of N-acetyl-5-glutamyl phosphate to yield N-acetyl-L-glutamate 5-semialdehyde. In Xanthomonas euvesicatoria pv. vesicatoria (strain 85-10) (Xanthomonas campestris pv. vesicatoria), this protein is N-acetyl-gamma-glutamyl-phosphate reductase.